The following is a 505-amino-acid chain: Catalase (505 aa).

The tract at residues 1–25 (MSRQDKKLTGVFGHPVSDRENSMTA) is disordered. Catalysis depends on residues H56 and N129. Y339 provides a ligand contact to heme.

Belongs to the catalase family. As to quaternary structure, homodimer. Requires heme as cofactor.

The catalysed reaction is 2 H2O2 = O2 + 2 H2O. In terms of biological role, decomposes hydrogen peroxide into water and oxygen; serves to protect cells from the toxic effects of hydrogen peroxide. This chain is Catalase (katA), found in Staphylococcus aureus (strain MRSA252).